A 211-amino-acid polypeptide reads, in one-letter code: FMN-dependent NADH:quinone oxidoreductase (211 aa).

Residues 17–19 (SYS) and 99–102 (MWNF) contribute to the FMN site.

This sequence belongs to the azoreductase type 1 family. As to quaternary structure, homodimer. Requires FMN as cofactor.

The enzyme catalyses 2 a quinone + NADH + H(+) = 2 a 1,4-benzosemiquinone + NAD(+). It carries out the reaction N,N-dimethyl-1,4-phenylenediamine + anthranilate + 2 NAD(+) = 2-(4-dimethylaminophenyl)diazenylbenzoate + 2 NADH + 2 H(+). Its function is as follows. Quinone reductase that provides resistance to thiol-specific stress caused by electrophilic quinones. Functionally, also exhibits azoreductase activity. Catalyzes the reductive cleavage of the azo bond in aromatic azo compounds to the corresponding amines. This chain is FMN-dependent NADH:quinone oxidoreductase, found in Exiguobacterium sp. (strain ATCC BAA-1283 / AT1b).